The following is a 971-amino-acid chain: Kinesin-like protein KIN-6 (971 aa).

Disordered regions lie at residues 1–44 and 93–121; these read MEEK…SSLA and TTTTKSRPRNVWPQNPSKKNNAKENRNPE. Over residues 29–39 the composition is skewed to low complexity; that stretch reads ATPFTTTTKPP. Residues 76–460 form the Kinesin motor domain; it reads SLKIFLRIKP…LRQASPYMKI (385 aa). 202-209 is an ATP binding site; sequence GPSGSGKT. Positions 700–709 are enriched in basic and acidic residues; that stretch reads RREAGSEESS. 2 disordered regions span residues 700 to 856 and 872 to 917; these read RREA…TEEM and KTTN…RLQP. The span at 768-783 shows a compositional bias: polar residues; that stretch reads QSVNSEENVGIPSTIT. Positions 785–797 are enriched in basic and acidic residues; it reads VEAEVTDFQRDQN. Residues 809 to 827 are compositionally biased toward polar residues; the sequence is EVSQDCINSGLSNVQTKSA. Basic and acidic residues predominate over residues 831 to 842; that stretch reads RFPDSEKQERNR. The segment covering 903–915 has biased composition (basic residues); sequence KKQKNGQKPKRRL.

The protein belongs to the TRAFAC class myosin-kinesin ATPase superfamily. Kinesin family. KIN-6 subfamily.

This is Kinesin-like protein KIN-6 from Arabidopsis thaliana (Mouse-ear cress).